Reading from the N-terminus, the 85-residue chain is Small ribosomal subunit protein bS20 (85 aa).

Residues 1–22 (MPQIKSAIKRVKTQNATNKRNA) form a disordered region. Polar residues predominate over residues 13-22 (TQNATNKRNA).

This sequence belongs to the bacterial ribosomal protein bS20 family.

Its function is as follows. Binds directly to 16S ribosomal RNA. In Lactobacillus acidophilus (strain ATCC 700396 / NCK56 / N2 / NCFM), this protein is Small ribosomal subunit protein bS20.